The following is a 281-amino-acid chain: 2-dehydro-3-deoxyphosphooctonate aldolase (281 aa).

The protein belongs to the KdsA family.

The protein resides in the cytoplasm. The catalysed reaction is D-arabinose 5-phosphate + phosphoenolpyruvate + H2O = 3-deoxy-alpha-D-manno-2-octulosonate-8-phosphate + phosphate. The protein operates within carbohydrate biosynthesis; 3-deoxy-D-manno-octulosonate biosynthesis; 3-deoxy-D-manno-octulosonate from D-ribulose 5-phosphate: step 2/3. Its pathway is bacterial outer membrane biogenesis; lipopolysaccharide biosynthesis. The chain is 2-dehydro-3-deoxyphosphooctonate aldolase from Pseudomonas syringae pv. tomato (strain ATCC BAA-871 / DC3000).